Here is a 546-residue protein sequence, read N- to C-terminus: Chaperonin GroEL 1 (546 aa).

ATP contacts are provided by residues 30–33 (TLGP), Lys51, 87–91 (DGTTT), Gly415, and Asp495. A disordered region spans residues 527–546 (DAAPTAAPGGPGAGGPGFDF). Residues 535-546 (GGPGAGGPGFDF) show a composition bias toward gly residues.

It belongs to the chaperonin (HSP60) family. In terms of assembly, forms a cylinder of 14 subunits composed of two heptameric rings stacked back-to-back. Interacts with the co-chaperonin GroES.

Its subcellular location is the cytoplasm. It catalyses the reaction ATP + H2O + a folded polypeptide = ADP + phosphate + an unfolded polypeptide.. Together with its co-chaperonin GroES, plays an essential role in assisting protein folding. The GroEL-GroES system forms a nano-cage that allows encapsulation of the non-native substrate proteins and provides a physical environment optimized to promote and accelerate protein folding. The polypeptide is Chaperonin GroEL 1 (Burkholderia lata (strain ATCC 17760 / DSM 23089 / LMG 22485 / NCIMB 9086 / R18194 / 383)).